The chain runs to 363 residues: 3-methyl-D-ornithine--L-lysine ligase (363 aa).

Lysine 10 is an ATP binding site. 11-12 (LQ) is a binding site for L-lysine. Residues aspartate 31, 49 to 50 (DV), and 72 to 73 (EN) contribute to the ATP site. Glutamate 72 provides a ligand contact to L-lysine. ADP contacts are provided by residues lysine 104, lysine 131, serine 138, and 160–163 (EEYV). D-ornithine-binding positions include 169–171 (SLE) and aspartate 225. 3 residues coordinate Mg(2+): glutamate 227, glutamate 239, and aspartate 241. Glutamate 239 contacts ADP. D-ornithine-binding positions include 243 to 248 (RFPSQT) and glutamate 302. Positions 246 and 302 each coordinate L-lysine.

It belongs to the PylC family. Mg(2+) serves as cofactor.

The catalysed reaction is (3R)-3-methyl-D-ornithine + L-lysine + ATP = (3R)-3-methyl-D-ornithyl-N(6)-L-lysine + ADP + phosphate + H(+). It participates in amino-acid biosynthesis; L-pyrrolysine biosynthesis. Is required for the biosynthesis of pyrrolysine. Catalyzes the ATP-dependent ligation between (3R)-3-methyl-D-ornithine and L-lysine, leading to (3R)-3-methyl-D-ornithyl-N6-L-lysine. The sequence is that of 3-methyl-D-ornithine--L-lysine ligase from Methanosarcina barkeri (strain Fusaro / DSM 804).